The sequence spans 306 residues: Curved DNA-binding protein (306 aa).

Residues Asp-5–Trp-69 form the J domain.

The protein localises to the cytoplasm. It is found in the nucleoid. In terms of biological role, DNA-binding protein that preferentially recognizes a curved DNA sequence. It is probably a functional analog of DnaJ; displays overlapping activities with DnaJ, but functions under different conditions, probably acting as a molecular chaperone in an adaptive response to environmental stresses other than heat shock. Lacks autonomous chaperone activity; binds native substrates and targets them for recognition by DnaK. Its activity is inhibited by the binding of CbpM. The sequence is that of Curved DNA-binding protein from Escherichia coli (strain SMS-3-5 / SECEC).